We begin with the raw amino-acid sequence, 96 residues long: UPF0235 protein YpsIP31758_0827 (96 aa).

Belongs to the UPF0235 family.

The chain is UPF0235 protein YpsIP31758_0827 from Yersinia pseudotuberculosis serotype O:1b (strain IP 31758).